A 213-amino-acid polypeptide reads, in one-letter code: Large ribosomal subunit protein uL4 (213 aa).

Positions 51–90 are disordered; sequence TASTLTKAEVRGGGRKPYKQKHTGRARQGSIRNPHYVGGG. The span at 63-75 shows a compositional bias: basic residues; it reads GGRKPYKQKHTGR.

This sequence belongs to the universal ribosomal protein uL4 family. In terms of assembly, part of the 50S ribosomal subunit.

In terms of biological role, one of the primary rRNA binding proteins, this protein initially binds near the 5'-end of the 23S rRNA. It is important during the early stages of 50S assembly. It makes multiple contacts with different domains of the 23S rRNA in the assembled 50S subunit and ribosome. Forms part of the polypeptide exit tunnel. This is Large ribosomal subunit protein uL4 from Malacoplasma penetrans (strain HF-2) (Mycoplasma penetrans).